The primary structure comprises 429 residues: Glutamate-1-semialdehyde 2,1-aminomutase (429 aa).

Lys-265 bears the N6-(pyridoxal phosphate)lysine mark.

Belongs to the class-III pyridoxal-phosphate-dependent aminotransferase family. HemL subfamily. Homodimer. Pyridoxal 5'-phosphate serves as cofactor.

It is found in the cytoplasm. The enzyme catalyses (S)-4-amino-5-oxopentanoate = 5-aminolevulinate. It functions in the pathway porphyrin-containing compound metabolism; protoporphyrin-IX biosynthesis; 5-aminolevulinate from L-glutamyl-tRNA(Glu): step 2/2. The protein is Glutamate-1-semialdehyde 2,1-aminomutase of Shewanella piezotolerans (strain WP3 / JCM 13877).